The chain runs to 244 residues: MDLRLAGRRALVTGAGKGIGRSIVKALHAAGARVVAVSRTQADLDSLVRECPGVETVCVDLADWEATEQALGGVGPVDLLVNNAAVAFLQPFLEVTKEAYDMSFSVNLRAVIQVSQIVARGLIARGAPGVIVNVSSQASQRGLTNHSVYCSTKGALDTLTKVMAVELGPHKIRVNAVNPTVVMTPMGQAAWSDPQKAKAMLDRIPLGRFAEVENVVDTILFLLSDRSSMTTGSTVPVDGGFLAT.

M1 carries the N-acetylmethionine modification. Residue 11 to 39 participates in NADP(+) binding; the sequence is LVTGAGKGIGRSIVKALHAAGARVVAVSR. R21 is subject to Omega-N-methylarginine. S46 is subject to Phosphoserine. A substrate-binding site is contributed by S136. The active-site Proton acceptor is the Y149. Residue K153 is part of the active site.

It belongs to the short-chain dehydrogenases/reductases (SDR) family. In terms of assembly, homotetramer.

The protein resides in the membrane. It carries out the reaction xylitol + NADP(+) = L-xylulose + NADPH + H(+). Catalyzes the NADPH-dependent reduction of several pentoses, tetroses, trioses, alpha-dicarbonyl compounds and L-xylulose. Participates in the uronate cycle of glucose metabolism. May play a role in the water absorption and cellular osmoregulation in the proximal renal tubules by producing xylitol, an osmolyte, thereby preventing osmolytic stress from occurring in the renal tubules. The polypeptide is L-xylulose reductase (DCXR) (Bos taurus (Bovine)).